Consider the following 103-residue polypeptide: Small ribosomal subunit protein uS10 (103 aa).

The protein belongs to the universal ribosomal protein uS10 family. In terms of assembly, part of the 30S ribosomal subunit.

Functionally, involved in the binding of tRNA to the ribosomes. This Neorickettsia sennetsu (strain ATCC VR-367 / Miyayama) (Ehrlichia sennetsu) protein is Small ribosomal subunit protein uS10.